The primary structure comprises 195 residues: ATP-dependent Clp protease proteolytic subunit (195 aa).

The active-site Nucleophile is the Ser-98. The active site involves His-123.

The protein belongs to the peptidase S14 family. As to quaternary structure, fourteen ClpP subunits assemble into 2 heptameric rings which stack back to back to give a disk-like structure with a central cavity, resembling the structure of eukaryotic proteasomes.

Its subcellular location is the cytoplasm. It carries out the reaction Hydrolysis of proteins to small peptides in the presence of ATP and magnesium. alpha-casein is the usual test substrate. In the absence of ATP, only oligopeptides shorter than five residues are hydrolyzed (such as succinyl-Leu-Tyr-|-NHMec, and Leu-Tyr-Leu-|-Tyr-Trp, in which cleavage of the -Tyr-|-Leu- and -Tyr-|-Trp bonds also occurs).. Functionally, cleaves peptides in various proteins in a process that requires ATP hydrolysis. Has a chymotrypsin-like activity. Plays a major role in the degradation of misfolded proteins. In Helicobacter pylori (strain G27), this protein is ATP-dependent Clp protease proteolytic subunit.